Consider the following 387-residue polypeptide: Protein PHYTOCHROME KINASE SUBSTRATE 3 (387 aa).

Disordered stretches follow at residues 1–21, 74–128, and 242–271; these read MDAE…PQLL, HEKE…CNSQ, and LSTK…ASVA. A compositionally biased stretch (polar residues) spans 12-21; sequence QISSYKPQLL. Over residues 74–83 the composition is skewed to basic and acidic residues; the sequence is HEKENTHDHP. Positions 114–128 are enriched in polar residues; it reads HGTPSVRSESSCNSQ. Residues 242–261 show a composition bias toward low complexity; the sequence is LSTKNNNHNNNGNNSSMSSN.

Belongs to the PKS family.

Functionally, probably involved in the phytochrome signaling pathway. This chain is Protein PHYTOCHROME KINASE SUBSTRATE 3 (PKS3), found in Arabidopsis thaliana (Mouse-ear cress).